Reading from the N-terminus, the 344-residue chain is MMVIRPVERGDLAGLMQLAGKTGGGLTSLPADEKTLSSRIDRALQTWQGTLPKSEQGYVFVLEESDTGTVVGICAIEVAVGLNDPWYNYRVGTLVHASKELNVYNALPTLFLSNDHTGSSELCTLFLDPDWRKEGNGYLLSKSRFMFMAAFRDRFNEKVVAEMRGVIDETGYSPFWESLGERFFSMEFSRADYLCGTGQKAFIAELMPKHPIYTDFLSPQAQAVIGQVHPQTAPARAVLEKEGFRYHNYVDIFDGGPTLECDVDRVRAIRKSRLVTVAEGQPAPGEWPACLVANEQYDQFRAMLIHTNPTCERLVLTAAQLDVLKCNAGDTVRLVRLCPEEKTA.

A succinyl-CoA-binding site is contributed by Leu125. His229 acts as the Proton donor in catalysis.

It belongs to the arginine N-succinyltransferase family.

It catalyses the reaction succinyl-CoA + L-arginine = N(2)-succinyl-L-arginine + CoA + H(+). Its pathway is amino-acid degradation; L-arginine degradation via AST pathway; L-glutamate and succinate from L-arginine: step 1/5. Catalyzes the transfer of succinyl-CoA to arginine to produce N(2)-succinylarginine. The chain is Arginine N-succinyltransferase from Enterobacter sp. (strain 638).